The following is a 467-amino-acid chain: Dimethylamine methyltransferase MtbB1 (467 aa).

A non-standard amino acid (pyrrolysine) is located at residue O356.

It belongs to the dimethylamine methyltransferase family.

It catalyses the reaction Co(I)-[dimethylamine-specific corrinoid protein] + dimethylamine + H(+) = methyl-Co(III)-[dimethylamine-specific corrinoid protein] + methylamine. Its pathway is one-carbon metabolism; methanogenesis from dimethylamine. In terms of biological role, catalyzes the transfer of a methyl group from dimethylamine to the corrinoid cofactor of MtbC. This chain is Dimethylamine methyltransferase MtbB1 (mtbB1), found in Methanosarcina barkeri (strain Fusaro / DSM 804).